The sequence spans 229 residues: Large ribosomal subunit protein uL1 (229 aa).

Belongs to the universal ribosomal protein uL1 family. In terms of assembly, part of the 50S ribosomal subunit.

Functionally, binds directly to 23S rRNA. The L1 stalk is quite mobile in the ribosome, and is involved in E site tRNA release. In terms of biological role, protein L1 is also a translational repressor protein, it controls the translation of the L11 operon by binding to its mRNA. The polypeptide is Large ribosomal subunit protein uL1 (Pasteurella multocida (strain Pm70)).